A 149-amino-acid chain; its full sequence is General odorant-binding protein 99b (149 aa).

The signal sequence occupies residues 1-16 (MKVLIVLLLGLAFVLA). Cystine bridges form between Cys-40–Cys-71, Cys-67–Cys-125, and Cys-114–Cys-134.

Belongs to the PBP/GOBP family. As to expression, expressed in adult olfactory system. Expressed in subsets of sensilla in both olfactory organs, the maxillary palps, and third antennal segments.

The protein localises to the secreted. In terms of biological role, present in the aqueous fluid surrounding olfactory sensory dendrites and are thought to aid in the capture and transport of hydrophobic odorants into and through this fluid. The chain is General odorant-binding protein 99b (Obp99b) from Drosophila melanogaster (Fruit fly).